The following is a 167-amino-acid chain: Putative N-acetylgalactosamine-6-phosphate deacetylase (167 aa).

The protein belongs to the metallo-dependent hydrolases superfamily. NagA family.

It catalyses the reaction N-acetyl-D-galactosamine 6-phosphate + H2O = D-galactosamine 6-phosphate + acetate. The polypeptide is Putative N-acetylgalactosamine-6-phosphate deacetylase (agaA) (Escherichia coli (strain K12)).